Here is a 100-residue protein sequence, read N- to C-terminus: NADH-quinone oxidoreductase subunit K (100 aa).

The next 3 membrane-spanning stretches (helical) occupy residues 4 to 24 (LTHG…GLVI), 28 to 48 (LLFM…AFVV), and 60 to 80 (VMYI…LALL).

It belongs to the complex I subunit 4L family. As to quaternary structure, NDH-1 is composed of 13 different subunits. Subunits NuoA, H, J, K, L, M, N constitute the membrane sector of the complex.

The protein localises to the cell inner membrane. It catalyses the reaction a quinone + NADH + 5 H(+)(in) = a quinol + NAD(+) + 4 H(+)(out). Its function is as follows. NDH-1 shuttles electrons from NADH, via FMN and iron-sulfur (Fe-S) centers, to quinones in the respiratory chain. The immediate electron acceptor for the enzyme in this species is believed to be ubiquinone. Couples the redox reaction to proton translocation (for every two electrons transferred, four hydrogen ions are translocated across the cytoplasmic membrane), and thus conserves the redox energy in a proton gradient. In Enterobacter sp. (strain 638), this protein is NADH-quinone oxidoreductase subunit K.